We begin with the raw amino-acid sequence, 428 residues long: Glutamate-1-semialdehyde 2,1-aminomutase 1 (428 aa).

At Lys-268 the chain carries N6-(pyridoxal phosphate)lysine.

Belongs to the class-III pyridoxal-phosphate-dependent aminotransferase family. HemL subfamily. In terms of assembly, homodimer. Pyridoxal 5'-phosphate is required as a cofactor.

The protein resides in the cytoplasm. It carries out the reaction (S)-4-amino-5-oxopentanoate = 5-aminolevulinate. Its pathway is porphyrin-containing compound metabolism; protoporphyrin-IX biosynthesis; 5-aminolevulinate from L-glutamyl-tRNA(Glu): step 2/2. The sequence is that of Glutamate-1-semialdehyde 2,1-aminomutase 1 from Geobacillus kaustophilus (strain HTA426).